The primary structure comprises 229 residues: Nectarin-1 (229 aa).

The signal sequence occupies residues 1–32 (MAAFGINSKIFQSMEMAILFLLAISIDRYCFA). The cysteines at positions 42 and 57 are disulfide-linked. A glycan (N-linked (GlcNAc...) asparagine) is linked at asparagine 60. The Cupin type-1 domain maps to 69 to 217 (LAISKPGATN…TFQINTEDVQ (149 aa)). Residues histidine 117, histidine 119, glutamate 124, and histidine 163 each contribute to the Mn(2+) site.

Monomer. In the absence of manganese, it forms tetrameric and pentameric forms which show superoxide dismutase activity. Mn(2+) serves as cofactor. As to expression, nectary tissues and to a lower level ovary. Not detected in petals, stems, leaves, roots or other floral tissues.

The protein resides in the secreted. The protein localises to the extracellular space. Its subcellular location is the apoplast. It carries out the reaction 2 superoxide + 2 H(+) = H2O2 + O2. May interact with bacterial adhesins thereby protecting the reproductive tissues from microbial attack. Has no oxalate oxidase activity. The chain is Nectarin-1 (NECI) from Nicotiana langsdorffii x Nicotiana sanderae (Ornamental tobacco).